Here is a 269-residue protein sequence, read N- to C-terminus: uncharacterized protein (269 aa).

The segment at 1–21 is disordered; it reads MAYSSSNSDIEDDSSKSNSNL.

This is an uncharacterized protein from Homo sapiens (Human).